The chain runs to 254 residues: E3 ubiquitin-protein ligase NEURL3 (254 aa).

Positions 17–174 (ALSFHGDATG…TTKAIELLDP (158 aa)) constitute an NHR domain. The segment at 197 to 236 (CVICFHNTANTRLMPCGHSQFCGSCAWHIFKDTARCPMCR) adopts an RING-type zinc-finger fold.

The protein resides in the cytoplasm. The enzyme catalyses S-ubiquitinyl-[E2 ubiquitin-conjugating enzyme]-L-cysteine + [acceptor protein]-L-lysine = [E2 ubiquitin-conjugating enzyme]-L-cysteine + N(6)-ubiquitinyl-[acceptor protein]-L-lysine.. It functions in the pathway protein modification; protein ubiquitination. Functionally, E3 ubiquitin-protein ligase that plays a role in various biological processes such as lung development or innate immunity. Seems to utilize UBE2E1. Promotes innate antiviral response by catalyzing 'Lys-63'-linked ubiquitination of IRF7. Also inhibits hepatitis C virus assembly by directly binding to viral E1 envelope glycoprotein to disrupt its interaction with E2. Plays an essential role in TLR4-mediated activation of MAPK pathways by promoting 'Lys-48'-linked polyubiquitination of the phosphatase DUSP1/MKP1. This Rattus norvegicus (Rat) protein is E3 ubiquitin-protein ligase NEURL3 (Neurl3).